We begin with the raw amino-acid sequence, 143 residues long: Phospholipase A2 isozymes PA3A/PA3B/PA5 (143 aa).

Trp10, Gly12, and Gly14 together coordinate Ca(2+). Intrachain disulfides connect Cys11/Cys33, Cys32/Cys72, and Cys39/Cys65. His36 is a catalytic residue. Asp37 contributes to the Ca(2+) binding site.

This sequence belongs to the phospholipase A2 family. Group III subfamily. Ca(2+) is required as a cofactor. Expressed by the venom gland.

It localises to the secreted. It catalyses the reaction a 1,2-diacyl-sn-glycero-3-phosphocholine + H2O = a 1-acyl-sn-glycero-3-phosphocholine + a fatty acid + H(+). In terms of biological role, PLA2 catalyzes the calcium-dependent hydrolysis of the 2-acyl groups in 3-sn-phosphoglycerides. The chain is Phospholipase A2 isozymes PA3A/PA3B/PA5 from Heloderma suspectum (Gila monster).